We begin with the raw amino-acid sequence, 340 residues long: Ketol-acid reductoisomerase (NADP(+)) (340 aa).

The 182-residue stretch at 1 to 182 folds into the KARI N-terminal Rossmann domain; sequence MRVYYDRDCD…GGGRSGIIET (182 aa). NADP(+)-binding positions include 24–27, Arg48, Ser51, Ser53, and 83–86; these read YGSQ and DELQ. His108 is an active-site residue. Gly134 contacts NADP(+). The KARI C-terminal knotted domain maps to 183 to 329; that stretch reads NFREECETDL…AKLREMMPWI (147 aa). Mg(2+) is bound by residues Asp191, Glu195, Glu227, and Glu231. Ser252 is a binding site for substrate.

This sequence belongs to the ketol-acid reductoisomerase family. Mg(2+) is required as a cofactor.

It carries out the reaction (2R)-2,3-dihydroxy-3-methylbutanoate + NADP(+) = (2S)-2-acetolactate + NADPH + H(+). The enzyme catalyses (2R,3R)-2,3-dihydroxy-3-methylpentanoate + NADP(+) = (S)-2-ethyl-2-hydroxy-3-oxobutanoate + NADPH + H(+). It participates in amino-acid biosynthesis; L-isoleucine biosynthesis; L-isoleucine from 2-oxobutanoate: step 2/4. The protein operates within amino-acid biosynthesis; L-valine biosynthesis; L-valine from pyruvate: step 2/4. Its function is as follows. Involved in the biosynthesis of branched-chain amino acids (BCAA). Catalyzes an alkyl-migration followed by a ketol-acid reduction of (S)-2-acetolactate (S2AL) to yield (R)-2,3-dihydroxy-isovalerate. In the isomerase reaction, S2AL is rearranged via a Mg-dependent methyl migration to produce 3-hydroxy-3-methyl-2-ketobutyrate (HMKB). In the reductase reaction, this 2-ketoacid undergoes a metal-dependent reduction by NADPH to yield (R)-2,3-dihydroxy-isovalerate. This Ruegeria sp. (strain TM1040) (Silicibacter sp.) protein is Ketol-acid reductoisomerase (NADP(+)).